A 334-amino-acid polypeptide reads, in one-letter code: tRNA U34 carboxymethyltransferase (334 aa).

Residues Lys-91, Trp-105, Lys-110, Gly-130, 152–154 (DPT), 181–182 (IE), Met-196, Tyr-200, and Arg-315 each bind carboxy-S-adenosyl-L-methionine.

Belongs to the class I-like SAM-binding methyltransferase superfamily. CmoB family. Homotetramer.

The enzyme catalyses carboxy-S-adenosyl-L-methionine + 5-hydroxyuridine(34) in tRNA = 5-carboxymethoxyuridine(34) in tRNA + S-adenosyl-L-homocysteine + H(+). In terms of biological role, catalyzes carboxymethyl transfer from carboxy-S-adenosyl-L-methionine (Cx-SAM) to 5-hydroxyuridine (ho5U) to form 5-carboxymethoxyuridine (cmo5U) at position 34 in tRNAs. The protein is tRNA U34 carboxymethyltransferase of Klebsiella pneumoniae subsp. pneumoniae (strain ATCC 700721 / MGH 78578).